The following is a 160-amino-acid chain: SsrA-binding protein (160 aa).

Positions 132 to 160 (KEFDKRDTVRERDSNRELQRTMRNKGKEE) are disordered.

The protein belongs to the SmpB family.

It is found in the cytoplasm. Required for rescue of stalled ribosomes mediated by trans-translation. Binds to transfer-messenger RNA (tmRNA), required for stable association of tmRNA with ribosomes. tmRNA and SmpB together mimic tRNA shape, replacing the anticodon stem-loop with SmpB. tmRNA is encoded by the ssrA gene; the 2 termini fold to resemble tRNA(Ala) and it encodes a 'tag peptide', a short internal open reading frame. During trans-translation Ala-aminoacylated tmRNA acts like a tRNA, entering the A-site of stalled ribosomes, displacing the stalled mRNA. The ribosome then switches to translate the ORF on the tmRNA; the nascent peptide is terminated with the 'tag peptide' encoded by the tmRNA and targeted for degradation. The ribosome is freed to recommence translation, which seems to be the essential function of trans-translation. This is SsrA-binding protein from Pseudomonas entomophila (strain L48).